The primary structure comprises 202 residues: Imidazoleglycerol-phosphate dehydratase (202 aa).

It belongs to the imidazoleglycerol-phosphate dehydratase family.

The protein resides in the cytoplasm. The enzyme catalyses D-erythro-1-(imidazol-4-yl)glycerol 3-phosphate = 3-(imidazol-4-yl)-2-oxopropyl phosphate + H2O. It functions in the pathway amino-acid biosynthesis; L-histidine biosynthesis; L-histidine from 5-phospho-alpha-D-ribose 1-diphosphate: step 6/9. This Corynebacterium diphtheriae (strain ATCC 700971 / NCTC 13129 / Biotype gravis) protein is Imidazoleglycerol-phosphate dehydratase.